A 132-amino-acid chain; its full sequence is Small ribosomal subunit protein uS8 (132 aa).

The protein belongs to the universal ribosomal protein uS8 family. As to quaternary structure, part of the 30S ribosomal subunit. Contacts proteins S5 and S12.

Functionally, one of the primary rRNA binding proteins, it binds directly to 16S rRNA central domain where it helps coordinate assembly of the platform of the 30S subunit. In Halalkalibacterium halodurans (strain ATCC BAA-125 / DSM 18197 / FERM 7344 / JCM 9153 / C-125) (Bacillus halodurans), this protein is Small ribosomal subunit protein uS8.